A 253-amino-acid chain; its full sequence is TCF3 fusion partner (253 aa).

2 disordered regions span residues 49-72 and 142-211; these read SGGL…GRRR and DEGS…PELA. S167 is subject to Phosphoserine. Residues 170–181 are compositionally biased toward pro residues; the sequence is RRTPAPPEPGSP. Phosphothreonine is present on T172. Residues S180 and S188 each carry the phosphoserine modification. T207 bears the Phosphothreonine mark. K216 is covalently cross-linked (Glycyl lysine isopeptide (Lys-Gly) (interchain with G-Cter in SUMO2)). A disordered region spans residues 234 to 253; the sequence is VSRGPDKLLPYPTLASPASD. Phosphoserine occurs at positions 249 and 252.

In terms of assembly, interacts with NOL3; translocates NOL3 into the nucleus and negatively regulated TFPT-induced cell death. Component of the chromatin remodeling INO80 complex; specifically part of a complex module associated with the N-terminus of INO80.

Its subcellular location is the nucleus. Functionally, appears to promote apoptosis in a p53/TP53-independent manner. Putative regulatory component of the chromatin remodeling INO80 complex which is involved in transcriptional regulation, DNA replication and probably DNA repair. The protein is TCF3 fusion partner (TFPT) of Homo sapiens (Human).